The primary structure comprises 872 residues: Paladin (872 aa).

The segment at M1–L37 is disordered. G2 carries N-myristoyl glycine lipidation. Positions R186–A210 form a coiled coil.

Belongs to the paladin family.

It localises to the cytoplasm. The protein localises to the cytosol. This chain is Paladin (pald1), found in Xenopus tropicalis (Western clawed frog).